Here is a 190-residue protein sequence, read N- to C-terminus: Peptidyl-prolyl cis-trans isomerase A (190 aa).

An N-terminal signal peptide occupies residues 1-24; it reads MLKSTLAAVAAVFALSALSPAALA. A PPIase cyclophilin-type domain is found at 27 to 188; that stretch reads GDPHVLLTTS…KPVVILSAKV (162 aa).

This sequence belongs to the cyclophilin-type PPIase family.

The protein localises to the periplasm. It carries out the reaction [protein]-peptidylproline (omega=180) = [protein]-peptidylproline (omega=0). In terms of biological role, PPIases accelerate the folding of proteins. It catalyzes the cis-trans isomerization of proline imidic peptide bonds in oligopeptides. The protein is Peptidyl-prolyl cis-trans isomerase A (ppiA) of Salmonella typhimurium (strain LT2 / SGSC1412 / ATCC 700720).